Consider the following 412-residue polypeptide: MMSLTVLSPPQRFKRILQAMMLAVAVVYMTLLLYQSAYGYPGIQVPHSQVDALASEAVTTHRDQLLQDYVQSSTPTQPGAGAPAASPTTVIIRKDIRSFNFSDIEVSERPTATLLTELARRSRNGELLRDLSQRAVTATPQPPVTELDDIFISVKTTKNYHDTRLALIIKTWFQLARDQTWFFTDTDDHYYQEKTKGHLINTKCSQGHFRKALCCKMSAELDVFLESGKKWFCHFDDDNYVNVPRLVKLLDEYSPSVDWYLGKPSISSPLEIHLDSKNTTTNKKITFWFATGGAGFCLSRALTLKMLPIAGGGKFISIGDKIRFPDDVTMGFIIEHLLKVPLTVVDNFHSHLEPMEFIRQDTFQDQVSFSYAHMKNQWNVIKVDGFDMKTDPKRFYSLHCQLFPYFSFCPPR.

The Cytoplasmic segment spans residues 1–15 (MMSLTVLSPPQRFKR). A helical; Signal-anchor for type II membrane protein transmembrane segment spans residues 16–34 (ILQAMMLAVAVVYMTLLLY). Over 35–412 (QSAYGYPGIQ…FPYFSFCPPR (378 aa)) the chain is Lumenal. R164 lines the substrate pocket. Intrachain disulfides connect C204–C215 and C233–C297. Position 237 (D237) interacts with substrate. D238 contributes to the Mn(2+) binding site. The active site involves D327. H351 serves as a coordination point for Mn(2+). A disulfide bridge connects residues C400 and C409.

It belongs to the glycosyltransferase 31 family. Requires Mn(2+) as cofactor. Expressed in dorsal cells.

Its subcellular location is the golgi apparatus membrane. The enzyme catalyses 3-O-(alpha-L-fucosyl)-L-threonyl-[EGF-like domain protein] + UDP-N-acetyl-alpha-D-glucosamine = 3-O-(N-acetyl-beta-D-glucosaminyl-(1-&gt;3)-alpha-L-fucosyl)-L-threonyl-[EGF-like domain protein] + UDP + H(+). The catalysed reaction is 3-O-(alpha-L-fucosyl)-L-seryl-[EGF-like domain protein] + UDP-N-acetyl-alpha-D-glucosamine = 3-O-(N-acetyl-beta-D-glucosaminyl-(1-&gt;3)-alpha-L-fucosyl)-L-seryl-[EGF-like domain protein] + UDP + H(+). Functionally, glycosyltransferase involved in the elongation of O-linked ligands to activate Notch signaling. Possesses fucose-specific beta-1,3-N-acetylglucosaminyltransferase activity; extends the O-linked fucose on the Notch EGF repeats. Boundary-specific cell-signaling molecule that is responsible for dorsal-ventral cell interactions during wing development. The chain is Fringe glycosyltransferase (fng) from Drosophila melanogaster (Fruit fly).